Reading from the N-terminus, the 393-residue chain is Na(+)/H(+) antiporter NhaA (393 aa).

Transmembrane regions (helical) follow at residues 14–34, 60–80, 96–116, 125–145, 155–175, 179–199, 218–238, 263–283, 292–312, 330–350, and 362–382; these read AAGM…NWSV, LLLW…GLEV, MLPL…FLLF, AGWA…LTLL, VFLL…IALF, QVFW…AYMN, VCIL…GFFI, FLIV…GIVL, LGIA…FSWL, IVAV…ITLL, and YAKL…YLAL.

It belongs to the NhaA Na(+)/H(+) (TC 2.A.33) antiporter family.

The protein localises to the cell inner membrane. The catalysed reaction is Na(+)(in) + 2 H(+)(out) = Na(+)(out) + 2 H(+)(in). Its function is as follows. Na(+)/H(+) antiporter that extrudes sodium in exchange for external protons. The sequence is that of Na(+)/H(+) antiporter NhaA from Pectobacterium atrosepticum (strain SCRI 1043 / ATCC BAA-672) (Erwinia carotovora subsp. atroseptica).